The primary structure comprises 242 residues: Transcriptional regulatory protein btr (242 aa).

Residues 158 to 231 (MRSEQRLAAF…QREVRLIDLP (74 aa)) enclose the HTH crp-type domain. The H-T-H motif DNA-binding region spans 191–210 (REEIGNYLGLTLETVSRLFS).

May regulate gene expression in response to changes in oxygen levels or to changes in the redox potential of the bacterial environment. This chain is Transcriptional regulatory protein btr (btr), found in Bordetella pertussis (strain Tohama I / ATCC BAA-589 / NCTC 13251).